Here is an 869-residue protein sequence, read N- to C-terminus: Valine--tRNA ligase (869 aa).

Residues 47–57 (PYPTGNFHIGN) carry the 'HIGH' region motif. The short motif at 521–525 (KMSKS) is the 'KMSKS' region element. ATP is bound at residue Lys-524.

The protein belongs to the class-I aminoacyl-tRNA synthetase family. ValS type 2 subfamily.

Its subcellular location is the cytoplasm. The enzyme catalyses tRNA(Val) + L-valine + ATP = L-valyl-tRNA(Val) + AMP + diphosphate. In terms of biological role, catalyzes the attachment of valine to tRNA(Val). As ValRS can inadvertently accommodate and process structurally similar amino acids such as threonine, to avoid such errors, it has a 'posttransfer' editing activity that hydrolyzes mischarged Thr-tRNA(Val) in a tRNA-dependent manner. The polypeptide is Valine--tRNA ligase (Methanosarcina acetivorans (strain ATCC 35395 / DSM 2834 / JCM 12185 / C2A)).